The primary structure comprises 440 residues: 5-hydroxytryptamine receptor 6 (440 aa).

Residues 1-27 (MVPEPGPSANSTPAWGAGPPSAPGGSG) are Extracellular-facing. Residues 28–52 (WVAAALCVVIALTAAANSLLIALIC) form a helical membrane-spanning segment. Residues 53–62 (TQPALRNTSN) lie on the Cytoplasmic side of the membrane. Residues 63 to 88 (FFLVSLFTSDLMVGLVVMPPAMLNAL) traverse the membrane as a helical segment. Topologically, residues 89–96 (YGRWVLAR) are extracellular. A helical membrane pass occupies residues 97 to 122 (GLCLLWTAFDVMCCSASILNLCLISL). A disulfide bridge connects residues Cys-99 and Cys-180. Asp-106 serves as a coordination point for serotonin. The Cytoplasmic segment spans residues 123–142 (DRYLLILSPLRYKLRMTPPR). A helical transmembrane segment spans residues 143–167 (ALALVLGAWSLAALASFLPLLLGWH). Residues 168 to 185 (ELGHARPPVPGQCRLLAS) lie on the Extracellular side of the membrane. A helical membrane pass occupies residues 186–209 (LPFVLVASGLTFFLPSGAICFTYC). The Cytoplasmic portion of the chain corresponds to 210 to 266 (RILLAARKQAVQVASLTTGMASQASETLQVPRTPRPGVESADSRRLATKHSRKALKA). Residues 267 to 293 (SLTLGILLGMFFVTWLPFFVANIVQAV) traverse the membrane as a helical segment. Asn-288 provides a ligand contact to serotonin. The Extracellular portion of the chain corresponds to 294 to 299 (CDCISP). A helical transmembrane segment spans residues 300–323 (GLFDVLTWLGYCNSTMNPIIYPLF). The Cytoplasmic segment spans residues 324–440 (MRDFKRALGR…RPHPLGIPTN (117 aa)). The interval 346–392 (ASLASPSLRTSHSGPRPGLSLQQVLPLPLPPDSDSDSDAGSGGSSGL) is disordered. Residues 347–358 (SLASPSLRTSHS) are compositionally biased toward polar residues. Residues 362–371 (PGLSLQQVLP) show a composition bias toward low complexity.

This sequence belongs to the G-protein coupled receptor 1 family. Interacts with MTOR, RPTOR and NF1. Interacts with CDK5.

It localises to the cell membrane. G-protein coupled receptor for 5-hydroxytryptamine (serotonin), a biogenic hormone that functions as a neurotransmitter, a hormone and a mitogen. Also has a high affinity for tricyclic psychotropic drugs. Ligand binding causes a conformation change that triggers signaling via guanine nucleotide-binding proteins (G proteins) and modulates the activity of downstream effectors. HTR6 is coupled to G(s) G alpha proteins and mediates activation of adenylate cyclase activity. Controls pyramidal neurons migration during corticogenesis, through the regulation of CDK5 activity. Is an activator of mTOR signaling. The chain is 5-hydroxytryptamine receptor 6 (HTR6) from Pan troglodytes (Chimpanzee).